The sequence spans 702 residues: Autophagy-related protein 9 (702 aa).

Topologically, residues 1-205 are cytoplasmic; it reads MFYQPAQNKK…GKGLSCIIVH (205 aa). The tract at residues 35-128 is disordered; the sequence is QESLDSDEDE…SKQKPALPNF (94 aa). The segment covering 38-47 has biased composition (acidic residues); that stretch reads LDSDEDESSP. Low complexity predominate over residues 94–107; it reads SSKVPSKHPSPSFP. The segment covering 108 to 120 has biased composition (polar residues); it reads ETTSLRNLQNGSK. Residues 206–223 form a helical membrane-spanning segment; the sequence is RLFQILTVSFVIGFTTFI. Residues 224–251 lie on the Lumenal side of the membrane; it reads TSCIDWPAVTPHGSLAGVTKSQCIAQMS. Residues 252 to 270 form a helical membrane-spanning segment; sequence PITYLVLWLFLSFLLALWI. Topologically, residues 271–421 are cytoplasmic; it reads YYLTDIPRLW…RRRFIVAGFL (151 aa). An intramembrane segment occupies 422 to 446; the sequence is NCLFAPIVAIYLVIHNFFRYFNEYH. Residues 447 to 496 lie on the Cytoplasmic side of the membrane; sequence KNPGALSTRRYTPLALWTFREYNELQHFFDERINDSYAAASHYVSQFPDF. The helical transmembrane segment at 497–522 threads the bilayer; sequence NMIRLFKYISFILGSFTAILVIITVF. At 523-537 the chain is on the lumenal side; that stretch reads DPELMVTFEITKDRS. The helical transmembrane segment at 538-555 threads the bilayer; sequence VLFYLGLFGSLIAVSRSI. Residues 556 to 603 lie on the Cytoplasmic side of the membrane; it reads IPDETLVFAPEKALRRVITFTHYMPGWWSDNMHSKAVQQEFCSLYSYR. An intramembrane segment occupies 604 to 624; it reads IVNLLWEILGILLTPVLLFFT. The Cytoplasmic segment spans residues 625–702; sequence FPSCSQDIVD…NTEAPRRDLR (78 aa).

Belongs to the ATG9 family. Homotrimer; forms a homotrimer with a central pore that forms a path between the two membrane leaflets. Interacts with ctl1. Phosphorylated by atg1. Atg1 phosphorylation is required for preautophagosome elongation.

The protein localises to the preautophagosomal structure membrane. Its subcellular location is the cytoplasmic vesicle membrane. The protein resides in the golgi apparatus membrane. It localises to the endoplasmic reticulum membrane. The catalysed reaction is a 1,2-diacyl-sn-glycero-3-phosphocholine(in) = a 1,2-diacyl-sn-glycero-3-phosphocholine(out). It catalyses the reaction a 1,2-diacyl-sn-glycero-3-phospho-L-serine(in) = a 1,2-diacyl-sn-glycero-3-phospho-L-serine(out). It carries out the reaction a 1,2-diacyl-sn-glycero-3-phosphoethanolamine(in) = a 1,2-diacyl-sn-glycero-3-phosphoethanolamine(out). The enzyme catalyses a 1,2-diacyl-sn-glycero-3-phospho-(1D-myo-inositol-3-phosphate)(in) = a 1,2-diacyl-sn-glycero-3-phospho-(1D-myo-inositol-3-phosphate)(out). Phospholipid scramblase involved in autophagy and cytoplasm to vacuole transport (Cvt) vesicle formation. Cycles between the preautophagosomal structure/phagophore assembly site (PAS) and the cytoplasmic vesicle pool and supplies membrane for the growing autophagosome. Lipid scramblase activity plays a key role in preautophagosomal structure/phagophore assembly by distributing the phospholipids that arrive through atg2 from the cytoplasmic to the luminal leaflet of the bilayer, thereby driving autophagosomal membrane expansion. Also involved in endoplasmic reticulum-specific autophagic process and is essential for the survival of cells subjected to severe ER stress. Different machineries are required for anterograde trafficking to the PAS during either the Cvt pathway or bulk autophagy and for retrograde trafficking. Has a role in meiosis and sporulation. The protein is Autophagy-related protein 9 of Schizosaccharomyces pombe (strain 972 / ATCC 24843) (Fission yeast).